We begin with the raw amino-acid sequence, 673 residues long: ATP-binding cassette sub-family G member 8 (673 aa).

Positions 1-11 (MAGKAAEERGL) are enriched in basic and acidic residues. The disordered stretch occupies residues 1–25 (MAGKAAEERGLPKGATPQDTSGLQD). Over 1–416 (MAGKAAEERG…ISNDFRDLPT (416 aa)) the chain is Cytoplasmic. The 267-residue stretch at 47 to 313 (LEVRDLNYQV…FTAIGYPCPR (267 aa)) folds into the ABC transporter domain. The region spanning 411-665 (FRDLPTLLIH…VLYYVSLRFI (255 aa)) is the ABC transmembrane type-2 domain. The helical transmembrane segment at 417–437 (LLIHGAEACLMSMTIGFLYFG) threads the bilayer. The Extracellular segment spans residues 438 to 447 (HGSIQLSFMD). The helical transmembrane segment at 448 to 468 (TAALLFMIGALIPFNVILDVI) threads the bilayer. Residues 469-497 (SKCYSERAMLYYELEDGLYTTGPYFFAKI) lie on the Cytoplasmic side of the membrane. A helical membrane pass occupies residues 498 to 518 (LGELPEHCAYIIIYGMPTYWL). Residues 519-527 (ANLRPGLQP) lie on the Extracellular side of the membrane. A helical membrane pass occupies residues 528–548 (FLLHFLLVWLVVFCCRIMALA). Residues 549-555 (AAALLPT) are Cytoplasmic-facing. A helical membrane pass occupies residues 556 to 576 (FHMASFFSNALYNSFYLAGGF). The Extracellular portion of the chain corresponds to 577–639 (MINLSSLWTV…LSVMELDSYP (63 aa)). N619 is a glycosylation site (N-linked (GlcNAc...) asparagine). The helical transmembrane segment at 640–660 (LYAIYLIVIGLSGGFMVLYYV) threads the bilayer. The Cytoplasmic portion of the chain corresponds to 661-673 (SLRFIKQKPSQDW).

It belongs to the ABC transporter superfamily. ABCG family. Eye pigment precursor importer (TC 3.A.1.204) subfamily. Heterodimer with ABCG8. Mg(2+) serves as cofactor. Post-translationally, N-glycosylated. Predominantly expressed in the liver. Low expression levels in the small intestine and colon. Very low levels in other tissues, including brain, heart and spleen.

It is found in the cell membrane. The protein resides in the apical cell membrane. The catalysed reaction is cholesterol(in) + ATP + H2O = cholesterol(out) + ADP + phosphate + H(+). It catalyses the reaction sitosterol(in) + ATP + H2O = sitosterol(out) + ADP + phosphate + H(+). Its activity is regulated as follows. The ATPase activity of the heterodimer is stimulated by cholate. Taurocholate, glycocholate, taurochenodeoxycholate, glycochenodeoxycholate and taurodeoxycholate also stimulate ATPase activity, but to a lower degree. Glycodeoxycholate has no significant effect on ATPase activity. ATPase activity is inhibited by vanadate and by berillium fluoride. In terms of biological role, ABCG5 and ABCG8 form an obligate heterodimer that mediates Mg(2+)- and ATP-dependent sterol transport across the cell membrane. Plays an essential role in the selective transport of the dietary cholesterol in and out of the enterocytes and in the selective sterol excretion by the liver into bile. Required for normal sterol homeostasis. The heterodimer with ABCG5 has ATPase activity. This is ATP-binding cassette sub-family G member 8 from Homo sapiens (Human).